Consider the following 480-residue polypeptide: Dimethyl-sulfide monooxygenase (480 aa).

5 residues coordinate FMN: Asp58, Thr104, His154, Tyr158, and Ser230. The interval 423-480 (QDSYKPGSLRRKLIGTNDGRVESTHPAAQYRDAYVGKESVADRTQPSPFANAKAPVAE) is disordered.

It belongs to the NtaA/SnaA/DszA monooxygenase family. Heterodimer of 2 subunits, DmoA and DmoB. Requires FMN as cofactor.

The enzyme catalyses dimethyl sulfide + NADH + O2 + H(+) = methanethiol + formaldehyde + NAD(+) + H2O. Inhibited by umbelliferone, 8-anilinonaphthalenesulfonate, a range of metal-chelating agents, and Hg(2+), Cd(2+) and Pb(2+) ions. In terms of biological role, monooxygenase that mediates oxidation of dimethyl sulfide, the first step in dimethyl sulfide degradation pathway. Has much lower activity with diethyl sulfide and other short-chain alkyl methyl sulfides. This chain is Dimethyl-sulfide monooxygenase (dmoA), found in Hyphomicrobium sulfonivorans.